The sequence spans 99 residues: C-C motif chemokine 17 (99 aa).

An N-terminal signal peptide occupies residues 1–23; the sequence is MIPLKMLLLVTLLLGASLQVTHA. 2 cysteine pairs are disulfide-bonded: C33-C57 and C34-C73.

The protein belongs to the intercrine beta (chemokine CC) family. As to expression, expressed in thymus, spleen, lymph node, lung and heart.

The protein localises to the secreted. In terms of biological role, chemokine, which displays chemotactic activity for T lymphocytes, preferentially Th2 cells, but not monocytes or granulocytes. Therefore plays an important role in a wide range of inflammatory and immunological processes. Acts by binding to CCR4 at T-cell surface. Mediates GM-CSF/CSF2-driven pain and inflammation. In the brain, required to maintain the typical, highly branched morphology of hippocampal microglia under homeostatic conditions. May be important for the appropriate adaptation of microglial morphology and synaptic plasticity to acute lipopolysaccharide (LPS)-induced neuroinflammation. Plays a role in wound healing, mainly by inducing fibroblast migration into the wound. The chain is C-C motif chemokine 17 (CCL17) from Canis lupus familiaris (Dog).